We begin with the raw amino-acid sequence, 506 residues long: Light-independent protochlorophyllide reductase subunit B (506 aa).

Aspartate 36 contributes to the [4Fe-4S] cluster binding site. The active-site Proton donor is aspartate 279. 414 to 415 contributes to the substrate binding site; that stretch reads GL.

Belongs to the ChlB/BchB/BchZ family. In terms of assembly, protochlorophyllide reductase is composed of three subunits; BchL, BchN and BchB. Forms a heterotetramer of two BchB and two BchN subunits. It depends on [4Fe-4S] cluster as a cofactor.

It catalyses the reaction chlorophyllide a + oxidized 2[4Fe-4S]-[ferredoxin] + 2 ADP + 2 phosphate = protochlorophyllide a + reduced 2[4Fe-4S]-[ferredoxin] + 2 ATP + 2 H2O. Its pathway is porphyrin-containing compound metabolism; bacteriochlorophyll biosynthesis (light-independent). Functionally, component of the dark-operative protochlorophyllide reductase (DPOR) that uses Mg-ATP and reduced ferredoxin to reduce ring D of protochlorophyllide (Pchlide) to form chlorophyllide a (Chlide). This reaction is light-independent. The NB-protein (BchN-BchB) is the catalytic component of the complex. This chain is Light-independent protochlorophyllide reductase subunit B, found in Methylobacterium sp. (strain 4-46).